A 665-amino-acid polypeptide reads, in one-letter code: MSEKNFYITTPIYYPSGKLHIGSAYTTIACDVLARYKRLMGYDVFYLTGLDEHGQKIQQKAEEAGITPQAYVDGMAVGVKELWQLLDISYDKFIRTTDDYHEKVVAQVFERLLAQDDIYLGEYSGWYSVSDEEFFTESQLAEVFRDEAGNVTGGIAPSGHEVEWVSEESYFLRLSKYQDRLVEFFKAHPEFITPDGRLNEMLRNFIEPGLEDLAVSRTTFTWGVPVPSNPKHVVYVWIDALLNYATALGYAQDEHGNFDKFWNGTVFHMVGKDILRFHSIYWPILLMMLDVKLPDRLIAHGWFVMKDGKMSKSKGNVVYPEMLVERYGLDPLRYYLMRNLPVGSDGTFTPEDYVGRINYELANDLGNLLNRTVSMINKYFDGQIPAYVEGVTEFDHVLAEVAEQSIADFHTHMEAVDYPRALEAVWTLISRTNKYIDETAPWVLAKDEALRDQLASVMSHLAASIRVVAHLIEPFMMETSRAVLTQLGLEEVSSLENLSLADFPADVTVVAKGTPIFPRLNMEEEIAYIKEQMEGNKPAVEKEWNPDEVELKLNKDEIKFEDFDKVEIRVAEVKEVSKVEGSDKLLQFRLDAGDGEDRQILSGIAKYYPNEQELVGKKVQIVANLKPRKMMKKYVSQGMILSAEHDGKLTLLTVDPAVPNGSVIG.

A 'HIGH' region motif is present at residues 13–23 (YYPSGKLHIGS). The 'KMSKS' region motif lies at 309-313 (KMSKS). K312 is an ATP binding site. The 104-residue stretch at 562-665 (DFDKVEIRVA…PAVPNGSVIG (104 aa)) folds into the tRNA-binding domain.

It belongs to the class-I aminoacyl-tRNA synthetase family. MetG type 2B subfamily. As to quaternary structure, homodimer.

It is found in the cytoplasm. The catalysed reaction is tRNA(Met) + L-methionine + ATP = L-methionyl-tRNA(Met) + AMP + diphosphate. In terms of biological role, is required not only for elongation of protein synthesis but also for the initiation of all mRNA translation through initiator tRNA(fMet) aminoacylation. This is Methionine--tRNA ligase (metG) from Streptococcus pneumoniae serotype 4 (strain ATCC BAA-334 / TIGR4).